Here is a 65-residue protein sequence, read N- to C-terminus: Antimicrobial peptide THP1 (65 aa).

A signal peptide spans 1–25 (MRIVYLLFPFILLLAQGAAGSSLAL). 3 cysteine pairs are disulfide-bonded: Cys31–Cys53, Cys38–Cys59, and Cys43–Cys60. A propeptide spanning residues 61–65 (KTLLG) is cleaved from the precursor.

The protein belongs to the beta-defensin family.

It is found in the secreted. In terms of biological role, bactericidal activity; inhibits S.aureus and E.coli. The protein is Antimicrobial peptide THP1 of Meleagris gallopavo (Wild turkey).